Reading from the N-terminus, the 177-residue chain is MSDTEDNKNKQTTRRDFMVLTASSVAAIGAVCTLWPLVDSLNPSADVLALSSIEVDLSNIAVGQTVTVKWQGKPVFITNRTPDKIAEARAVKMSELIDPEADQARVKAGHDNWLVTIGICTHLGCVPLANQGEYDGWFCPCHGSQYDSSGRVRRGPAPLNLAVPPYTFISDKKIRIG.

A helical membrane pass occupies residues 18-38; that stretch reads MVLTASSVAAIGAVCTLWPLV. One can recognise a Rieske domain in the interval 88–175; it reads ARAVKMSELI…YTFISDKKIR (88 aa). 4 residues coordinate [2Fe-2S] cluster: Cys120, His122, Cys139, and His142. A disulfide bridge links Cys125 with Cys141.

It belongs to the Rieske iron-sulfur protein family. As to quaternary structure, the main subunits of complex b-c1 are: cytochrome b, cytochrome c1 and the Rieske protein. Requires [2Fe-2S] cluster as cofactor.

Its subcellular location is the cell membrane. The catalysed reaction is a quinol + 2 Fe(III)-[cytochrome c](out) = a quinone + 2 Fe(II)-[cytochrome c](out) + 2 H(+)(out). In terms of biological role, component of the ubiquinol-cytochrome c reductase complex (complex III or cytochrome b-c1 complex), which is a respiratory chain that generates an electrochemical potential coupled to ATP synthesis. The protein is Ubiquinol-cytochrome c reductase iron-sulfur subunit (petA) of Rickettsia conorii (strain ATCC VR-613 / Malish 7).